A 464-amino-acid polypeptide reads, in one-letter code: Lysosomal proton-coupled steroid conjugate and bile acid symporter SLC46A3 (464 aa).

Positions 1–26 are cleaved as a signal peptide; sequence MRKVLLVEPVIFIYIFASSLTSPVVQ. The Extracellular portion of the chain corresponds to 27–71; sequence QFIYRKLWEEEYNSTAISSDNSSHCERNKSSPTYVMEKAIQEKTS. 3 N-linked (GlcNAc...) asparagine glycosylation sites follow: asparagine 39, asparagine 47, and asparagine 54. The chain crosses the membrane as a helical span at residues 72 to 92; sequence FFNMQLDLTGAVPSLIVAFII. At 93-104 the chain is on the cytoplasmic side; the sequence is VANGDHQGRKKS. The chain crosses the membrane as a helical span at residues 105 to 125; sequence LVLPSIGALIADIFLTIVSYF. The Extracellular segment spans residues 126–130; sequence SWPTS. A helical membrane pass occupies residues 131 to 151; it reads VLFLATFISGLFGSMATFLGG. Topologically, residues 152–171 are cytoplasmic; the sequence is GFAYIADQCHDEKQKTTRIA. Residues 172-192 traverse the membrane as a helical segment; sequence VIDLIFGVVSGLAGLSSGYFL. The Extracellular portion of the chain corresponds to 193 to 198; it reads REMGFT. The chain crosses the membrane as a helical span at residues 199 to 219; sequence WTFATASLLHVVNIIYITFFL. The Cytoplasmic segment spans residues 220–259; that stretch reads QDTVHISEFQQQAPLSYKEHLKETFSGVYMLFKTAPSKKR. Residues 260-280 traverse the membrane as a helical segment; the sequence is ILIIVLLFIFMTYLFTMFGGS. Over 281 to 296 the chain is Extracellular; it reads SLFTLYELDEPLCWTE. The chain crosses the membrane as a helical span at residues 297–317; it reads VYIGYGAAAFTSISLTSFLGV. The Cytoplasmic segment spans residues 318–326; sequence YLFSKCLKD. A helical transmembrane segment spans residues 327–347; sequence IYIVFIGIFSYIGGIVMAAFA. At 348-349 the chain is on the extracellular side; sequence KT. The chain crosses the membrane as a helical span at residues 350–370; it reads TLLMFLVRVPSLFSIMPIPVL. At 371–384 the chain is on the cytoplasmic side; that stretch reads RSMLSKVVLPSEQG. A helical membrane pass occupies residues 385–405; that stretch reads AVFACIACLEVLTGTISLSVF. The Extracellular segment spans residues 406 to 418; it reads NVIYAATVAWFSG. A helical membrane pass occupies residues 419–439; it reads FSFLLSASLCLIPLGVLCWLL. Residues 440-464 are Cytoplasmic-facing; sequence CTSWNGEDLALLVPEEVSSIDSVDS.

It belongs to the major facilitator superfamily. SLC46A family.

It localises to the lysosome membrane. It carries out the reaction estrone 3-sulfate(out) + n H(+)(out) = estrone 3-sulfate(in) + n H(+)(in). The catalysed reaction is 25-hydroxyvitamin D3 sulfate(out) + n H(+)(out) = 25-hydroxyvitamin D3 sulfate(in) + n H(+)(in). It catalyses the reaction cholate(out) + n H(+)(out) = cholate(in) + n H(+)(in). The enzyme catalyses glycocholate(out) + n H(+)(out) = glycocholate(in) + n H(+)(in). It carries out the reaction taurocholate(out) + n H(+)(out) = taurocholate(in) + n H(+)(in). The catalysed reaction is dehydroepiandrosterone 3-sulfate(out) + n H(+)(out) = dehydroepiandrosterone 3-sulfate(in) + n H(+)(in). Its function is as follows. Lysosomal proton-coupled steroid conjugate and bile acid transporter. Preferentially recognizes lipophilic steroid conjugates or bile acis as endogenous substrates and seems to mediate escape from lysosomes to the cytoplasm. Modulates hepatic cytosolic copper homeostasis, maybe acting as a lysosomal copper transporter and sequestering copper ions in the lysosome. In Gallus gallus (Chicken), this protein is Lysosomal proton-coupled steroid conjugate and bile acid symporter SLC46A3 (SLC46A3).